Consider the following 201-residue polypeptide: Retinol-binding protein 4 (201 aa).

A signal peptide spans 1–18 (MEWVWALVLLAALGSAQA). 3 disulfide bridges follow: Cys22–Cys178, Cys88–Cys192, and Cys138–Cys147. Gln116 is a binding site for substrate. At Arg139 the chain carries Omega-N-methylarginine.

It belongs to the calycin superfamily. Lipocalin family. As to quaternary structure, interacts with TTR. Interaction with TTR prevents its loss by filtration through the kidney glomeruli. Interacts with STRA6.

Its subcellular location is the secreted. Functionally, retinol-binding protein that mediates retinol transport in blood plasma. Delivers retinol from the liver stores to the peripheral tissues. Transfers the bound all-trans retinol to STRA6, that then facilitates retinol transport across the cell membrane. This chain is Retinol-binding protein 4 (RBP4), found in Sus scrofa (Pig).